Consider the following 574-residue polypeptide: MEYYYYIIIAAVGGFAILTFIIIVVLRLKKSQKMREPLLPKEKGNVFVYKRDTQVQEKEEQVMMNARLYLRSTIYSLQDKIPKFGSRSDKVYFGVLGNSLNKLENDRIMAMVPVSKHWPIPLNSEAGRTTFRTIIKSLEIHPFISVPLLVDFIPEKHVAVSVRPFYADRGSLRDFIHKSKPKMPYADKYDTHLQLNEKIVSKFGRQILEALIFLKNHNFPYFHLNSANVLVDDQICLISDYENSFLGLEPRFSDFIRQHNEKIDPDVLSFGLVLFEMACGYEMENPHSVDISIPAHCYPEVRKVLEAIFKPFYGTPITLEELSKMDFFSYHKFKNLPLHRLTYTSRERDMMDAVIKLNKTFLSTNSKPNSKDLSQPKLKDLKKQKKRKQLVFTQSFEPIKMESQNGGGAAGGEYGNEGGYAISTSSSLPSNFLANVKPANSTSYSLLSNTTTNTTNTSTSSSLNSSFNSNVSTSYSNATTTTNTTSASSVSPPISSPPPPPPPPPPSKSSGPPPPPPPPPKSSGPPPPPPPKSSPPPPADGSRKGLLSSIESFSSSKLKKTKTVDKSGPLLKKS.

Residues Y6–L26 traverse the membrane as a helical segment. The Protein kinase domain occupies Y166–R346. N358 carries an N-linked (GlcNAc...) asparagine glycan. The tract at residues S366–K386 is disordered. N-linked (GlcNAc...) asparagine glycosylation is found at N440, N449, N453, N456, N464, N470, N477, and N483. A compositionally biased stretch (low complexity) spans T450 to P493. The interval T450 to S574 is disordered. The segment covering I494–A539 has biased composition (pro residues). Positions L546–S556 are enriched in low complexity.

This sequence belongs to the protein kinase superfamily. Ser/Thr protein kinase family.

Its subcellular location is the membrane. In Dictyostelium discoideum (Social amoeba), this protein is Probable inactive serine/threonine-protein kinase slob2 (slob2).